Consider the following 142-residue polypeptide: MKQGKFSVFLILLLMLTLVVAPKEKAEAASSGWQPVSGISGCKIRVITDAYTYTKSATSIDAYAETNGKCGKLNYKSFGVSIVEGGDIGPQYSGYFSSRTPTKKFYFSKLPKPTGTPWAVGLSVYKGKAKGAAFVYINPQKR.

The first 28 residues, 1–28 (MKQGKFSVFLILLLMLTLVVAPKEKAEA), serve as a signal peptide directing secretion.

As to quaternary structure, found in a complex with F(1)F(0) ATP synthase and SpoIIIJ and YqjG.

The protein localises to the secreted. The protein resides in the cell wall. In Bacillus subtilis (strain 168), this protein is Cell wall-binding protein YqgA (yqgA).